The sequence spans 452 residues: Glutamyl-tRNA(Gln) amidotransferase subunit A (452 aa).

Catalysis depends on charge relay system residues K56 and S131. S155 serves as the catalytic Acyl-ester intermediate.

This sequence belongs to the amidase family. GatA subfamily. In terms of assembly, heterotrimer of A, B and C subunits.

It carries out the reaction L-glutamyl-tRNA(Gln) + L-glutamine + ATP + H2O = L-glutaminyl-tRNA(Gln) + L-glutamate + ADP + phosphate + H(+). In terms of biological role, allows the formation of correctly charged Gln-tRNA(Gln) through the transamidation of misacylated Glu-tRNA(Gln) in organisms which lack glutaminyl-tRNA synthetase. The reaction takes place in the presence of glutamine and ATP through an activated gamma-phospho-Glu-tRNA(Gln). The polypeptide is Glutamyl-tRNA(Gln) amidotransferase subunit A (Campylobacter curvus (strain 525.92)).